The chain runs to 77 residues: Acyl carrier protein (77 aa).

One can recognise a Carrier domain in the interval 2 to 77; the sequence is ADTLERVTKI…DAVNYIQNQQ (76 aa). Serine 37 is subject to O-(pantetheine 4'-phosphoryl)serine.

Belongs to the acyl carrier protein (ACP) family. 4'-phosphopantetheine is transferred from CoA to a specific serine of apo-ACP by AcpS. This modification is essential for activity because fatty acids are bound in thioester linkage to the sulfhydryl of the prosthetic group.

The protein resides in the cytoplasm. It functions in the pathway lipid metabolism; fatty acid biosynthesis. Its function is as follows. Carrier of the growing fatty acid chain in fatty acid biosynthesis. The protein is Acyl carrier protein (acpA) of Bacillus subtilis (strain 168).